The primary structure comprises 271 residues: Tryptophan synthase alpha chain (271 aa).

Catalysis depends on proton acceptor residues Glu56 and Asp67.

This sequence belongs to the TrpA family. As to quaternary structure, tetramer of two alpha and two beta chains.

It carries out the reaction (1S,2R)-1-C-(indol-3-yl)glycerol 3-phosphate + L-serine = D-glyceraldehyde 3-phosphate + L-tryptophan + H2O. It participates in amino-acid biosynthesis; L-tryptophan biosynthesis; L-tryptophan from chorismate: step 5/5. Its function is as follows. The alpha subunit is responsible for the aldol cleavage of indoleglycerol phosphate to indole and glyceraldehyde 3-phosphate. This chain is Tryptophan synthase alpha chain, found in Mycobacterium avium (strain 104).